A 504-amino-acid chain; its full sequence is UDP-N-acetylmuramoylalanine--D-glutamate ligase (504 aa).

129 to 135 lines the ATP pocket; the sequence is GTNGKTT.

The protein belongs to the MurCDEF family.

Its subcellular location is the cytoplasm. The enzyme catalyses UDP-N-acetyl-alpha-D-muramoyl-L-alanine + D-glutamate + ATP = UDP-N-acetyl-alpha-D-muramoyl-L-alanyl-D-glutamate + ADP + phosphate + H(+). It participates in cell wall biogenesis; peptidoglycan biosynthesis. Cell wall formation. Catalyzes the addition of glutamate to the nucleotide precursor UDP-N-acetylmuramoyl-L-alanine (UMA). The sequence is that of UDP-N-acetylmuramoylalanine--D-glutamate ligase from Burkholderia mallei (strain ATCC 23344).